The chain runs to 279 residues: Eukaryotic translation initiation factor 3 subunit G (279 aa).

2 disordered regions span residues 69-90 (AKYG…QLGE) and 149-193 (LNGG…EARD). Serine 77 carries the post-translational modification Phosphoserine. The RRM domain occupies 196–275 (TTLKVSQLNT…LILHLEWSKK (80 aa)).

This sequence belongs to the eIF-3 subunit G family. Component of the eukaryotic translation initiation factor 3 (eIF-3) complex.

It is found in the cytoplasm. Its function is as follows. RNA-binding component of the eukaryotic translation initiation factor 3 (eIF-3) complex, which is involved in protein synthesis of a specialized repertoire of mRNAs and, together with other initiation factors, stimulates binding of mRNA and methionyl-tRNAi to the 40S ribosome. The eIF-3 complex specifically targets and initiates translation of a subset of mRNAs involved in cell proliferation. This subunit can bind 18S rRNA. In Lodderomyces elongisporus (strain ATCC 11503 / CBS 2605 / JCM 1781 / NBRC 1676 / NRRL YB-4239) (Yeast), this protein is Eukaryotic translation initiation factor 3 subunit G.